The chain runs to 198 residues: 7-methyl-GTP pyrophosphatase (198 aa).

The Proton acceptor role is filled by Asp69.

It belongs to the Maf family. YceF subfamily. A divalent metal cation is required as a cofactor.

The protein resides in the cytoplasm. It catalyses the reaction N(7)-methyl-GTP + H2O = N(7)-methyl-GMP + diphosphate + H(+). Nucleoside triphosphate pyrophosphatase that hydrolyzes 7-methyl-GTP (m(7)GTP). May have a dual role in cell division arrest and in preventing the incorporation of modified nucleotides into cellular nucleic acids. The polypeptide is 7-methyl-GTP pyrophosphatase (Yersinia pestis bv. Antiqua (strain Antiqua)).